The sequence spans 152 residues: SsrA-binding protein (152 aa).

It belongs to the SmpB family.

The protein resides in the cytoplasm. Required for rescue of stalled ribosomes mediated by trans-translation. Binds to transfer-messenger RNA (tmRNA), required for stable association of tmRNA with ribosomes. tmRNA and SmpB together mimic tRNA shape, replacing the anticodon stem-loop with SmpB. tmRNA is encoded by the ssrA gene; the 2 termini fold to resemble tRNA(Ala) and it encodes a 'tag peptide', a short internal open reading frame. During trans-translation Ala-aminoacylated tmRNA acts like a tRNA, entering the A-site of stalled ribosomes, displacing the stalled mRNA. The ribosome then switches to translate the ORF on the tmRNA; the nascent peptide is terminated with the 'tag peptide' encoded by the tmRNA and targeted for degradation. The ribosome is freed to recommence translation, which seems to be the essential function of trans-translation. The polypeptide is SsrA-binding protein (Lactobacillus helveticus (strain DPC 4571)).